The sequence spans 374 residues: Histone acetyltransferase type B catalytic subunit (374 aa).

Interaction with histone H4 N-terminus regions lie at residues 42-44 (DSE) and 194-196 (YKY). The region spanning 135 to 303 (VVYKSSLVDD…ESSRKSLKLE (169 aa)) is the N-acetyltransferase domain. The segment at 197–205 (WHYLGAKSF) is interaction with HAT2. Acetyl-CoA contacts are provided by residues 220–222 (FLI) and 227–233 (QNKGHGS). E255 serves as the catalytic Proton donor/acceptor. Positions 258 and 267 each coordinate acetyl-CoA. Residue S354 is modified to Phosphoserine.

This sequence belongs to the HAT1 family. In terms of assembly, component of the HAT-B complex composed of at least HAT1 and HAT2. In the cytoplasm, this complex binds to the histone H4 tail. In the nucleus, the HAT-B complex has an additional component, the histone H3/H4 chaperone HIF1.

Its subcellular location is the cytoplasm. It localises to the nucleus. It carries out the reaction L-lysyl-[protein] + acetyl-CoA = N(6)-acetyl-L-lysyl-[protein] + CoA + H(+). In terms of biological role, catalytic component of the histone acetylase B (HAT-B) complex. Acetylates 'Lys-12' of free histone H4 in the cytoplasm. The complex is also found in the nucleus, however it is not certain that it modifies histone H4 when packaged in chromatin. Histone H4 'Lys-12' acetylation is required for telomeric silencing. Has intrinsic substrate specificity that modifies lysine in recognition sequence GXGKXG. Involved in DNA double-strand break repair. The sequence is that of Histone acetyltransferase type B catalytic subunit (HAT1) from Saccharomyces cerevisiae (strain ATCC 204508 / S288c) (Baker's yeast).